The chain runs to 447 residues: MGKEKIHISIVVIGHVDSGKSTTTGHLIYKLGGIDKRVIESFEKEAAEMNKRSFKYAWVLDKLKAERERGITIDIALWKFETTKYSCTVIDAPGHRDFIKNMITGTSQADCAVLIIDSTTGGFEAGISKDGQTREHALLAFTLGVKHMICCCNKMDATTPKYSKSRYDEIVKEVSSYLKKVGYNPDKVPFVPISGFEGDNMIERSSNLDWYKGPTLLEALDQINEPKRPSEKPLRLPLQDVYKIGGIGTVPVGRVETGVIKPGMVVTFGPTGLTTEVKSVEMHHESLLEALPGDNVGFNVKNVAVKDLKRGYVASNSKDDPAKEAANFTAQVIIMNHPGQISNGYAPVLDCHTSHIAVKFAEIQTKIDRRSGKELEAAPKFLKNGDAGFVKMIPTKPMVVETFAQYPPLGRFAVRDMRQTVAVGVIKSVEKKEPTGAKVTKAAIKKK.

In terms of domain architecture, tr-type G spans Lys-5–Ser-230. The G1 stretch occupies residues Gly-14–Ser-21. Gly-14–Ser-21 contributes to the GTP binding site. The residue at position 55 (Lys-55) is an N6,N6-dimethyllysine. Positions Gly-70–Asp-74 are G2. N6,N6,N6-trimethyllysine is present on Lys-79. A G3 region spans residues Asp-91–Gly-94. GTP contacts are provided by residues Asp-91–His-95 and Asn-153–Asp-156. Residues Asn-153–Asp-156 are G4. At Lys-187 the chain carries N6,N6,N6-trimethyllysine. A G5 region spans residues Ser-194–Phe-196. Position 261 is an N6-methyllysine (Lys-261). Glu-289 is subject to 5-glutamyl glycerylphosphorylethanolamine. N6,N6,N6-trimethyllysine is present on Lys-306. Position 362 is a 5-glutamyl glycerylphosphorylethanolamine (Glu-362). Residue Lys-396 is modified to N6,N6,N6-trimethyllysine.

Belongs to the TRAFAC class translation factor GTPase superfamily. Classic translation factor GTPase family. EF-Tu/EF-1A subfamily.

The protein resides in the cytoplasm. Functionally, this protein promotes the GTP-dependent binding of aminoacyl-tRNA to the A-site of ribosomes during protein biosynthesis. The chain is Elongation factor 1-alpha (BLT63) from Hordeum vulgare (Barley).